Reading from the N-terminus, the 168-residue chain is Phosphopantetheine adenylyltransferase (168 aa).

Thr14 contributes to the substrate binding site. ATP is bound by residues 14–15 (TF) and His22. Substrate-binding residues include Lys46, Leu78, and Arg92. ATP contacts are provided by residues 93-95 (GLR), Glu103, and 128-134 (YSFISSS).

Belongs to the bacterial CoaD family. As to quaternary structure, homohexamer. Mg(2+) serves as cofactor.

The protein resides in the cytoplasm. The catalysed reaction is (R)-4'-phosphopantetheine + ATP + H(+) = 3'-dephospho-CoA + diphosphate. Its pathway is cofactor biosynthesis; coenzyme A biosynthesis; CoA from (R)-pantothenate: step 4/5. Reversibly transfers an adenylyl group from ATP to 4'-phosphopantetheine, yielding dephospho-CoA (dPCoA) and pyrophosphate. This chain is Phosphopantetheine adenylyltransferase, found in Xanthomonas campestris pv. campestris (strain 8004).